Here is a 1407-residue protein sequence, read N- to C-terminus: Adenylate cyclase, aggregation specific (1407 aa).

Topologically, residues 1 to 219 are cytoplasmic; the sequence is MASSSPMFND…KGYLHQHYNS (219 aa). Residues 28–131 form a disordered region; the sequence is NELHDGNGGG…SNSVANGGHL (104 aa). Residues 51 to 63 are compositionally biased toward polar residues; it reads LNKSQNQPYTQYN. Over residues 64–75 the composition is skewed to gly residues; the sequence is NGGGGGGGGGGH. Composition is skewed to low complexity over residues 80 to 90 and 98 to 115; these read HLNLNSITNNH and PNTL…NNHS. Helical transmembrane passes span 220 to 240, 244 to 264, 276 to 296, 304 to 324, 325 to 345, and 353 to 373; these read QIML…YGFT, IFML…SIFL, LFHP…LLEY, ILFL…LLFI, WMVM…FLES, and ISFV…LYVL. The Cytoplasmic segment spans residues 374–962; sequence EKFRKESFIA…KYVIINNVVE (589 aa). Residues 438-661 form the Guanylate cyclase 1 domain; sequence SILCFDIVQF…DTIARSHTLE (224 aa). Positions 443, 444, and 488 each coordinate Mg(2+). Disordered regions lie at residues 502–590, 751–799, and 828–876; these read AKKQ…EEIE, KSNN…VLGE, and NDIV…EEDF. Low complexity-rich tracts occupy residues 505-526, 535-581, and 752-795; these read QMPN…VNNI, NNNN…NNSG, and SNNN…SSSS. The span at 828 to 846 shows a compositional bias: polar residues; the sequence is NDIVSPSLTSNSPILDTTV. A compositionally biased stretch (low complexity) spans 847-871; sequence NNNNNNNNTNNNNKNQNNIYGNNNN. The next 5 helical transmembrane spans lie at 963–979, 992–1012, 1018–1038, 1071–1091, and 1105–1125; these read TKFF…MFYL, SNVI…LSFT, PLVY…CTVL, LSVL…SILI, and IGFV…KLAM. Positions 1189 to 1311 constitute a Guanylate cyclase 2 domain; sequence SIMFIQIAGF…DTANTASRMQ (123 aa). Residues 1378-1398 traverse the membrane as a helical segment; sequence ATPAGIASPLSGTLLGEIGSF. Topologically, residues 1399 to 1407 are cytoplasmic; sequence TTPRFHLSS.

This sequence belongs to the adenylyl cyclase class-4/guanylyl cyclase family. Requires Mg(2+) as cofactor. Expressed throughout the structure in the tipped mound and finger. Expressed primarily in the prestalk region of the slug. In the early culminant expression is increased in the posterior prespore and anterior-most regions and expands into the developing stalk. In the mid and late culminant it is expressed throughout the stalk.

It localises to the membrane. Its subcellular location is the cell projection. The protein localises to the uropodium. The enzyme catalyses ATP = 3',5'-cyclic AMP + diphosphate. Its activity is regulated as follows. Regulated by cyclic AMP receptor 1 through a guanine nucleotide binding protein and protein CRAC. Both positively and negatively regulated by extracellular cAMP; this regulation is part of the mechanism that establishes the oscillatory cAMP waves during aggregation. Its function is as follows. Coordinates cell aggregation by synthesizing the cAMP that influences differentiation and morphogenesis of cells within a developing multicellular structure. This Dictyostelium discoideum (Social amoeba) protein is Adenylate cyclase, aggregation specific (acaA).